Here is a 427-residue protein sequence, read N- to C-terminus: UDP-N-acetyl-D-mannosamine dehydrogenase (427 aa).

NAD(+) contacts are provided by Y19, I20, D39, R44, T91, and T130. Residues R155, V156, K207, N211, R214, H245, R247, and G258 each coordinate UDP-N-acetyl-alpha-D-mannosaminouronate. The active-site Proton donor/acceptor is K207. C261 serves as the catalytic Nucleophile. Residues Y318 and K319 each contribute to the UDP-N-acetyl-alpha-D-mannosaminouronate site. R326 serves as a coordination point for NAD(+). K404 is a binding site for UDP-N-acetyl-alpha-D-mannosaminouronate.

The protein belongs to the UDP-glucose/GDP-mannose dehydrogenase family. As to quaternary structure, homotetramer; probably dimer of dimers.

It carries out the reaction UDP-N-acetyl-alpha-D-mannosamine + 2 NAD(+) + H2O = UDP-N-acetyl-alpha-D-mannosaminouronate + 2 NADH + 3 H(+). Functionally, catalyzes the four-electron oxidation of UDP-N-acetyl-D-mannosamine (UDP-ManNAc), reducing NAD(+) and releasing UDP-N-acetylmannosaminuronic acid (UDP-ManNAcA). This Methanococcus maripaludis (strain C7 / ATCC BAA-1331) protein is UDP-N-acetyl-D-mannosamine dehydrogenase (wecC).